The following is a 246-amino-acid chain: Phosphatidylserine decarboxylase proenzyme (246 aa).

Ser-204 (schiff-base intermediate with substrate; via pyruvic acid) is an active-site residue. Ser-204 is subject to Pyruvic acid (Ser); by autocatalysis.

Belongs to the phosphatidylserine decarboxylase family. PSD-A subfamily. As to quaternary structure, heterodimer of a large membrane-associated beta subunit and a small pyruvoyl-containing alpha subunit. It depends on pyruvate as a cofactor. In terms of processing, is synthesized initially as an inactive proenzyme. Formation of the active enzyme involves a self-maturation process in which the active site pyruvoyl group is generated from an internal serine residue via an autocatalytic post-translational modification. Two non-identical subunits are generated from the proenzyme in this reaction, and the pyruvate is formed at the N-terminus of the alpha chain, which is derived from the carboxyl end of the proenzyme. The post-translation cleavage follows an unusual pathway, termed non-hydrolytic serinolysis, in which the side chain hydroxyl group of the serine supplies its oxygen atom to form the C-terminus of the beta chain, while the remainder of the serine residue undergoes an oxidative deamination to produce ammonia and the pyruvoyl prosthetic group on the alpha chain.

It localises to the cell membrane. It catalyses the reaction a 1,2-diacyl-sn-glycero-3-phospho-L-serine + H(+) = a 1,2-diacyl-sn-glycero-3-phosphoethanolamine + CO2. It participates in phospholipid metabolism; phosphatidylethanolamine biosynthesis; phosphatidylethanolamine from CDP-diacylglycerol: step 2/2. Its function is as follows. Catalyzes the formation of phosphatidylethanolamine (PtdEtn) from phosphatidylserine (PtdSer). This Zymomonas mobilis subsp. mobilis (strain ATCC 31821 / ZM4 / CP4) protein is Phosphatidylserine decarboxylase proenzyme.